The following is a 104-amino-acid chain: Flagellar hook-basal body complex protein FliE (104 aa).

The protein belongs to the FliE family.

It localises to the bacterial flagellum basal body. The chain is Flagellar hook-basal body complex protein FliE from Escherichia fergusonii (strain ATCC 35469 / DSM 13698 / CCUG 18766 / IAM 14443 / JCM 21226 / LMG 7866 / NBRC 102419 / NCTC 12128 / CDC 0568-73).